A 120-amino-acid polypeptide reads, in one-letter code: UPF0231 protein CKO_03249 (120 aa).

This sequence belongs to the UPF0231 family.

In Citrobacter koseri (strain ATCC BAA-895 / CDC 4225-83 / SGSC4696), this protein is UPF0231 protein CKO_03249.